The primary structure comprises 144 residues: Large ribosomal subunit protein uL13 (144 aa).

The protein belongs to the universal ribosomal protein uL13 family. In terms of assembly, part of the 50S ribosomal subunit.

This protein is one of the early assembly proteins of the 50S ribosomal subunit, although it is not seen to bind rRNA by itself. It is important during the early stages of 50S assembly. The chain is Large ribosomal subunit protein uL13 from Mesomycoplasma hyopneumoniae (strain 7448) (Mycoplasma hyopneumoniae).